Reading from the N-terminus, the 161-residue chain is Phosphopantetheine adenylyltransferase (161 aa).

Residue Ser8 coordinates substrate. ATP contacts are provided by residues 8–9 and His16; that span reads SF. Substrate-binding residues include Lys40, Leu72, and Arg86. ATP contacts are provided by residues 87–89, Glu97, and 122–128; these read GLR and FSFVSSS.

This sequence belongs to the bacterial CoaD family. In terms of assembly, homohexamer. Mg(2+) serves as cofactor.

The protein localises to the cytoplasm. The enzyme catalyses (R)-4'-phosphopantetheine + ATP + H(+) = 3'-dephospho-CoA + diphosphate. It functions in the pathway cofactor biosynthesis; coenzyme A biosynthesis; CoA from (R)-pantothenate: step 4/5. In terms of biological role, reversibly transfers an adenylyl group from ATP to 4'-phosphopantetheine, yielding dephospho-CoA (dPCoA) and pyrophosphate. The chain is Phosphopantetheine adenylyltransferase from Thermotoga neapolitana (strain ATCC 49049 / DSM 4359 / NBRC 107923 / NS-E).